Reading from the N-terminus, the 623-residue chain is uncharacterized protein (623 aa).

5 consecutive transmembrane segments (helical) span residues 242 to 262 (IALA…ITWL), 288 to 308 (IVSP…LDIF), 318 to 338 (VSMW…IALF), 361 to 381 (VINL…LLGV), and 387 to 407 (FNVS…ALAV).

It belongs to the MscS (TC 1.A.23) family.

The protein localises to the cell membrane. This is an uncharacterized protein from Helicobacter pylori (strain J99 / ATCC 700824) (Campylobacter pylori J99).